The sequence spans 338 residues: Ketol-acid reductoisomerase (NADP(+)) (338 aa).

One can recognise a KARI N-terminal Rossmann domain in the interval 1–181 (MKVYYDKDAD…GGTKGGVIET (181 aa)). NADP(+) contacts are provided by residues 24 to 27 (YGSQ), Arg47, and Ser52. Residue His107 is part of the active site. Gly133 serves as a coordination point for NADP(+). Positions 182-327 (NFKEETETDL…GQLRDMMPWI (146 aa)) constitute a KARI C-terminal knotted domain. Residues Asp190, Glu194, Glu226, and Glu230 each coordinate Mg(2+). Ser251 contacts substrate.

The protein belongs to the ketol-acid reductoisomerase family. Mg(2+) serves as cofactor.

The enzyme catalyses (2R)-2,3-dihydroxy-3-methylbutanoate + NADP(+) = (2S)-2-acetolactate + NADPH + H(+). It catalyses the reaction (2R,3R)-2,3-dihydroxy-3-methylpentanoate + NADP(+) = (S)-2-ethyl-2-hydroxy-3-oxobutanoate + NADPH + H(+). It participates in amino-acid biosynthesis; L-isoleucine biosynthesis; L-isoleucine from 2-oxobutanoate: step 2/4. The protein operates within amino-acid biosynthesis; L-valine biosynthesis; L-valine from pyruvate: step 2/4. Functionally, involved in the biosynthesis of branched-chain amino acids (BCAA). Catalyzes an alkyl-migration followed by a ketol-acid reduction of (S)-2-acetolactate (S2AL) to yield (R)-2,3-dihydroxy-isovalerate. In the isomerase reaction, S2AL is rearranged via a Mg-dependent methyl migration to produce 3-hydroxy-3-methyl-2-ketobutyrate (HMKB). In the reductase reaction, this 2-ketoacid undergoes a metal-dependent reduction by NADPH to yield (R)-2,3-dihydroxy-isovalerate. The sequence is that of Ketol-acid reductoisomerase (NADP(+)) from Azoarcus sp. (strain BH72).